Reading from the N-terminus, the 528-residue chain is Na(+)/H(+) antiporter NhaB (528 aa).

10 helical membrane passes run 28 to 50, 67 to 87, 98 to 118, 140 to 160, 240 to 260, 305 to 325, 350 to 370, 391 to 411, 449 to 469, and 476 to 496; these read FLVINPLLFFYVSPFVAGWVLVV, PGGLLAIQAVFIGMTSPSQVL, LLLVFMVAGIYFMKQLLLFVF, AFLSAFLDALTVIAVIIAVAV, FFLRMSPVTMPVLVAGIFTCF, ALIGVWLIAGLALHLASVGLI, EEALPFTALLAVFFAIVGVII, LVIFYIANGLLSMVSDNVFVG, ATPNGQAAFLFLLTSAIAPLI, and MVWMALPYTIVLSIVGVMAIE.

The protein belongs to the NhaB Na(+)/H(+) (TC 2.A.34) antiporter family.

It is found in the cell inner membrane. It catalyses the reaction 2 Na(+)(in) + 3 H(+)(out) = 2 Na(+)(out) + 3 H(+)(in). Its function is as follows. Na(+)/H(+) antiporter that extrudes sodium in exchange for external protons. The polypeptide is Na(+)/H(+) antiporter NhaB (Shewanella frigidimarina (strain NCIMB 400)).